The primary structure comprises 264 residues: tRNA pseudouridine synthase A (264 aa).

The active-site Nucleophile is the Asp-51. Tyr-109 provides a ligand contact to substrate.

The protein belongs to the tRNA pseudouridine synthase TruA family. As to quaternary structure, homodimer.

It catalyses the reaction uridine(38/39/40) in tRNA = pseudouridine(38/39/40) in tRNA. Formation of pseudouridine at positions 38, 39 and 40 in the anticodon stem and loop of transfer RNAs. The polypeptide is tRNA pseudouridine synthase A (Vibrio campbellii (strain ATCC BAA-1116)).